Consider the following 185-residue polypeptide: MKTAQELRTGNVVMIGADAMVVQKAEYNKSGRNSAVVKMKFKNLLTGAGMESVYKADDKFDVVVLERKEVTYSYFADPMYVFMDADYNQFEVESEMMGDALHYLEDGMACEVVFYNDKAISVELPTTLVREIIYTEPAVKGDTSSGKVLKNAKLNTGFELQVPLFCNIGDKIEIDTRTHEYRSRA.

This sequence belongs to the elongation factor P family.

The protein resides in the cytoplasm. The protein operates within protein biosynthesis; polypeptide chain elongation. In terms of biological role, involved in peptide bond synthesis. Stimulates efficient translation and peptide-bond synthesis on native or reconstituted 70S ribosomes in vitro. Probably functions indirectly by altering the affinity of the ribosome for aminoacyl-tRNA, thus increasing their reactivity as acceptors for peptidyl transferase. This Paraburkholderia xenovorans (strain LB400) protein is Elongation factor P.